The following is a 129-amino-acid chain: Large ribosomal subunit protein bL12 (129 aa).

Belongs to the bacterial ribosomal protein bL12 family. As to quaternary structure, homodimer. Part of the ribosomal stalk of the 50S ribosomal subunit. Forms a multimeric L10(L12)X complex, where L10 forms an elongated spine to which 2 to 4 L12 dimers bind in a sequential fashion. Binds GTP-bound translation factors.

Functionally, forms part of the ribosomal stalk which helps the ribosome interact with GTP-bound translation factors. Is thus essential for accurate translation. This is Large ribosomal subunit protein bL12 from Treponema denticola (strain ATCC 35405 / DSM 14222 / CIP 103919 / JCM 8153 / KCTC 15104).